Here is a 136-residue protein sequence, read N- to C-terminus: Transcription antitermination protein NusB (136 aa).

It belongs to the NusB family.

In terms of biological role, involved in transcription antitermination. Required for transcription of ribosomal RNA (rRNA) genes. Binds specifically to the boxA antiterminator sequence of the ribosomal RNA (rrn) operons. This is Transcription antitermination protein NusB from Paenarthrobacter aurescens (strain TC1).